A 313-amino-acid polypeptide reads, in one-letter code: Aspartate carbamoyltransferase catalytic subunit (313 aa).

Carbamoyl phosphate contacts are provided by Arg-59 and Thr-60. An L-aspartate-binding site is contributed by Lys-87. Carbamoyl phosphate contacts are provided by Arg-109, His-137, and Gln-140. Residues Arg-170 and Arg-224 each coordinate L-aspartate. Residues Gly-265 and Pro-266 each contribute to the carbamoyl phosphate site.

It belongs to the aspartate/ornithine carbamoyltransferase superfamily. ATCase family. As to quaternary structure, heterododecamer (2C3:3R2) of six catalytic PyrB chains organized as two trimers (C3), and six regulatory PyrI chains organized as three dimers (R2).

It carries out the reaction carbamoyl phosphate + L-aspartate = N-carbamoyl-L-aspartate + phosphate + H(+). It participates in pyrimidine metabolism; UMP biosynthesis via de novo pathway; (S)-dihydroorotate from bicarbonate: step 2/3. Functionally, catalyzes the condensation of carbamoyl phosphate and aspartate to form carbamoyl aspartate and inorganic phosphate, the committed step in the de novo pyrimidine nucleotide biosynthesis pathway. In Agrobacterium fabrum (strain C58 / ATCC 33970) (Agrobacterium tumefaciens (strain C58)), this protein is Aspartate carbamoyltransferase catalytic subunit.